The chain runs to 363 residues: Peroxisomal (S)-2-hydroxyacid oxidase GLO3 (363 aa).

The FMN hydroxy acid dehydrogenase domain maps to 1–357 (MDQIVNVDEF…TRNHVRTENE (357 aa)). FMN contacts are provided by residues 78-80 (PTG), Ser-107, 128-130 (QIY), and Thr-156. Tyr-130 contributes to the a 2-oxocarboxylate binding site. Arg-165 is a binding site for a 2-oxocarboxylate. Lys-228 and Ser-250 together coordinate FMN. The active-site Proton acceptor is the His-252. Residue Arg-255 participates in a 2-oxocarboxylate binding. Residues 283-287 (DGGVR) and 306-307 (GR) each bind FMN. The short motif at 361–363 (SML) is the Microbody targeting signal element.

It belongs to the FMN-dependent alpha-hydroxy acid dehydrogenase family. As to quaternary structure, homotetramer. The cofactor is FMN.

Its subcellular location is the peroxisome. The enzyme catalyses a (2S)-2-hydroxycarboxylate + O2 = a 2-oxocarboxylate + H2O2. The catalysed reaction is 2-hydroxy-4-methylpentanoate + O2 = 4-methyl-2-oxopentanoate + H2O2. It carries out the reaction 2-hydroxyhexanoate + O2 = 2-oxohexanoate + H2O2. It catalyses the reaction 2-hydroxyoctanoate + O2 = 2-oxooctanoate + H2O2. Oxidase that catalyzes the oxidation of a broad range of 2-hydroxyacids to the corresponding 2-oxoacids, with a reduction of O2 to H2O2. Displays the highest activity with leucic acid (2-hydroxy-4-methylpentanoate) and has intermediate activity with 2-hydroxyhexanoate and 2-hydroxyoctanote. Shows lower activity with 2-hydroxydodecanoate, valic acid, and isoleucic acid and extremely low activity with glycolate and L-lactate. Cannot use 2-hydroxyhexadecanoate or D-lactate as substrates. May be involved in the conversion or degradation of 2-hydroxyacids produced during the metabolism of fatty acids or amino acids. The chain is Peroxisomal (S)-2-hydroxyacid oxidase GLO3 (GLO3) from Arabidopsis thaliana (Mouse-ear cress).